A 195-amino-acid polypeptide reads, in one-letter code: Probable GTP-binding protein EngB (195 aa).

The 174-residue stretch at 22–195 (GRPEVALAGR…WAALLPFVAS (174 aa)) folds into the EngB-type G domain. Residues 30–37 (GRSNVGKS), 57–61 (GKTQT), 75–78 (DVPG), 142–145 (TKAD), and 174–176 (FSA) contribute to the GTP site. Residues Ser37 and Thr59 each coordinate Mg(2+).

This sequence belongs to the TRAFAC class TrmE-Era-EngA-EngB-Septin-like GTPase superfamily. EngB GTPase family. Requires Mg(2+) as cofactor.

Necessary for normal cell division and for the maintenance of normal septation. This chain is Probable GTP-binding protein EngB, found in Geobacillus kaustophilus (strain HTA426).